The chain runs to 63 residues: uncharacterized protein (63 aa).

A helical membrane pass occupies residues 38–58 (ISLFIILHLCLLVCLLLSFYF).

The protein localises to the membrane. This is an uncharacterized protein from Saccharomyces cerevisiae (strain ATCC 204508 / S288c) (Baker's yeast).